A 306-amino-acid chain; its full sequence is Mitochondrial brown fat uncoupling protein 1 (306 aa).

Residues 1 to 10 (MVGTTTTDVP) are Mitochondrial intermembrane-facing. A helical transmembrane segment spans residues 11–32 (PTMGVKIFSAGVAACLADVITF). 3 Solcar repeats span residues 11–102 (PTMG…VQEF), 110–200 (PSLG…MKGA), and 209–294 (DDVP…LKGE). Residues 33–73 (PLDTAKVRQQIQGEFPITSGIRYKGVLGTITTLAKTEGPLK) lie on the Mitochondrial matrix side of the membrane. K56 lines the fatty acid 16:0 pocket. The helical transmembrane segment at 74 to 96 (LYSGLPAGLQRQISFASLRIGLY) threads the bilayer. Residues 97–115 (DTVQEFFTSGEETPSLGSK) lie on the Mitochondrial intermembrane side of the membrane. Residues 116 to 132 (ISAGLTTGGVAVFIGQP) form a helical membrane-spanning segment. At 133-177 (TEVVKVRLQAQSHLHGLKPRYTGTYNAYRIIATTESLTSLWKGTT) the chain is on the mitochondrial matrix side. A helical membrane pass occupies residues 178-194 (PNLLRNVIINCTELVTY). Residues 195-211 (DLMKGALVRNEILADDV) lie on the Mitochondrial intermembrane side of the membrane. The helical transmembrane segment at 212-231 (PCHFVSALIAGFCTTLLSSP) threads the bilayer. Topologically, residues 232 to 265 (VDVVKTRFINSPPGQYASVPNCAMTMFTKEGPTA) are mitochondrial matrix. C253 bears the Cysteine sulfenic acid (-SOH) mark. Residues 266-288 (FFKGFVPSFLRLGSWNVIMFVCF) traverse the membrane as a helical segment. Residue K268 coordinates fatty acid 16:0. At 289–306 (EKLKGELMRSRQTVDCAT) the chain is on the mitochondrial intermembrane side.

It belongs to the mitochondrial carrier (TC 2.A.29) family. In terms of assembly, most probably functions as a monomer. Binds one purine nucleotide per monomer. However, has also been suggested to function as a homodimer or a homotetramer. Tightly associates with cardiolipin in the mitochondrion inner membrane; may stabilize and regulate its activity. May undergo sulfenylation upon cold exposure. May increase the sensitivity of UCP1 thermogenic function to the activation by noradrenaline probably through structural effects. Post-translationally, may undergo ubiquitin-mediated proteasomal degradation. As to expression, brown adipose tissue.

Its subcellular location is the mitochondrion inner membrane. The catalysed reaction is H(+)(in) = H(+)(out). With respect to regulation, has no constitutive proton transporter activity and has to be activated by long-chain fatty acids/LCFAs. Inhibited by purine nucleotides. Both purine nucleotides and LCFAs bind the cytosolic side of the transporter and directly compete to activate or inhibit it. Activated by noradrenaline and reactive oxygen species. Despite lacking canonical translational encoding for selenocysteine, a small pool of the protein has been observed to selectively incorporate selenocysteine at 'Cys-253'. Selenocysteine-modified protein is highly sensitive to redox modification and may constitute a pool of protein highly sensitive to activation by elevated levels of reactive oxygen species (ROS). Functionally, mitochondrial protein responsible for thermogenic respiration, a specialized capacity of brown adipose tissue and beige fat that participates in non-shivering adaptive thermogenesis to temperature and diet variations and more generally to the regulation of energy balance. Functions as a long-chain fatty acid/LCFA and proton symporter, simultaneously transporting one LCFA and one proton through the inner mitochondrial membrane. However, LCFAs remaining associated with the transporter via their hydrophobic tails, it results in an apparent transport of protons activated by LCFAs. Thereby, dissipates the mitochondrial proton gradient and converts the energy of substrate oxydation into heat instead of ATP. Regulates the production of reactive oxygen species/ROS by mitochondria. The chain is Mitochondrial brown fat uncoupling protein 1 from Oryctolagus cuniculus (Rabbit).